We begin with the raw amino-acid sequence, 504 residues long: Maturase K (504 aa).

This sequence belongs to the intron maturase 2 family. MatK subfamily.

It is found in the plastid. The protein resides in the chloroplast. Its function is as follows. Usually encoded in the trnK tRNA gene intron. Probably assists in splicing its own and other chloroplast group II introns. The polypeptide is Maturase K (Carpinus betulus (European hornbeam)).